Here is a 690-residue protein sequence, read N- to C-terminus: Glycine--tRNA ligase beta subunit (690 aa).

This sequence belongs to the class-II aminoacyl-tRNA synthetase family. As to quaternary structure, tetramer of two alpha and two beta subunits.

It localises to the cytoplasm. It carries out the reaction tRNA(Gly) + glycine + ATP = glycyl-tRNA(Gly) + AMP + diphosphate. The sequence is that of Glycine--tRNA ligase beta subunit from Buchnera aphidicola subsp. Acyrthosiphon pisum (strain Tuc7).